The primary structure comprises 747 residues: Histone-lysine N-methyltransferase EZH1 (747 aa).

The disordered stretch occupies residues 188-231; it reads DEEEDGHNDPSDGKQDDSKEDLPVTRKRKRHAIEGNKKSSKKQF. A compositionally biased stretch (basic and acidic residues) spans 194-211; it reads HNDPSDGKQDDSKEDLPV. A Glycyl lysine isopeptide (Lys-Gly) (interchain with G-Cter in SUMO2) cross-link involves residue K327. Positions 368-414 are disordered; it reads VSASCSNASASAMAETKEGDSDRDTGNDWASSSSEANSRCQTPTKQK. Residues 369–381 show a composition bias toward low complexity; sequence SASCSNASASAMA. The segment covering 382-393 has biased composition (basic and acidic residues); sequence ETKEGDSDRDTG. The segment covering 395-414 has biased composition (polar residues); sequence DWASSSSEANSRCQTPTKQK. A Nuclear localization signal motif is present at residues 491-496; sequence QKKKRK. The CXC domain maps to 504-606; that stretch reads CRKIQLKKDN…CKVVSCKNCS (103 aa). Residues 613–728 enclose the SET domain; the sequence is KHLLLAPSDV…AGEELFFDYR (116 aa).

The protein belongs to the class V-like SAM-binding methyltransferase superfamily. Histone-lysine methyltransferase family. EZ subfamily. As to quaternary structure, component of the PRC2/EED-EZH1 complex, which includes EED, EZH1, SUZ12, RBBP4 and AEBP2. The PRC2/EED-EZH1 is less abundant than the PRC2/EED-EZH2 complex, has weak methyltransferase activity and compacts chromatin in the absence of the methyltransferase cofactor S-adenosyl-L-methionine (SAM). Interacts with EZHIP; the interaction blocks EZH1 methyltransferase activity. As to expression, expressed at high levels in kidney, adrenal gland, testis and brain.

Its subcellular location is the nucleus. It catalyses the reaction L-lysyl(27)-[histone H3] + 3 S-adenosyl-L-methionine = N(6),N(6),N(6)-trimethyl-L-lysyl(27)-[histone H3] + 3 S-adenosyl-L-homocysteine + 3 H(+). Its function is as follows. Polycomb group (PcG) protein. Catalytic subunit of the PRC2/EED-EZH1 complex, which methylates 'Lys-27' of histone H3, leading to transcriptional repression of the affected target gene. Able to mono-, di- and trimethylate 'Lys-27' of histone H3 to form H3K27me1, H3K27me2 and H3K27me3, respectively. Required for embryonic stem cell derivation and self-renewal, suggesting that it is involved in safeguarding embryonic stem cell identity. Compared to EZH2-containing complexes, it is less abundant in embryonic stem cells, has weak methyltransferase activity and plays a less critical role in forming H3K27me3, which is required for embryonic stem cell identity and proper differentiation. This is Histone-lysine N-methyltransferase EZH1 (Ezh1) from Mus musculus (Mouse).